The chain runs to 277 residues: Phosphoenolpyruvate synthase regulatory protein (277 aa).

157–164 (GVSRCGKT) lines the ADP pocket.

Belongs to the pyruvate, phosphate/water dikinase regulatory protein family. PSRP subfamily.

It catalyses the reaction [pyruvate, water dikinase] + ADP = [pyruvate, water dikinase]-phosphate + AMP + H(+). The catalysed reaction is [pyruvate, water dikinase]-phosphate + phosphate + H(+) = [pyruvate, water dikinase] + diphosphate. Its function is as follows. Bifunctional serine/threonine kinase and phosphorylase involved in the regulation of the phosphoenolpyruvate synthase (PEPS) by catalyzing its phosphorylation/dephosphorylation. This Escherichia coli O17:K52:H18 (strain UMN026 / ExPEC) protein is Phosphoenolpyruvate synthase regulatory protein.